The chain runs to 121 residues: Large ribosomal subunit protein bL12 (121 aa).

The protein belongs to the bacterial ribosomal protein bL12 family. Homodimer. Part of the ribosomal stalk of the 50S ribosomal subunit. Forms a multimeric L10(L12)X complex, where L10 forms an elongated spine to which 2 to 4 L12 dimers bind in a sequential fashion. Binds GTP-bound translation factors.

Its function is as follows. Forms part of the ribosomal stalk which helps the ribosome interact with GTP-bound translation factors. Is thus essential for accurate translation. In Clostridium perfringens (strain 13 / Type A), this protein is Large ribosomal subunit protein bL12.